Consider the following 94-residue polypeptide: Ig kappa-B5 chain V region 2699 (94 aa).

A framework-1 region spans residues 1–23; sequence AFELTQTPSSVEAAVGGTVTINC. Residues 24–34 are complementarity-determining-1; that stretch reads QASTDISSNLA. The tract at residues 35–49 is framework-2; sequence WYTPKPGSPPKLLIY. A complementarity-determining-2 region spans residues 50–56; it reads SASTLAS. Positions 57 to 82 are framework-3; the sequence is GVSSRFKGSGSGVLITLTISDLECGV. A region of interest (complementarity-determining-3) is located at residue Ser-83. Residues 84–93 form a framework-4 region; that stretch reads FGGGTKVVVE.

This chain is Ig kappa-B5 chain V region 2699, found in Oryctolagus cuniculus (Rabbit).